The following is a 57-amino-acid chain: UPF0391 membrane protein Nham_2738 (57 aa).

2 helical membrane passes run 4 to 24 (WVVT…GGLA) and 30 to 50 (IAKI…VVGL).

Belongs to the UPF0391 family.

The protein localises to the cell membrane. The chain is UPF0391 membrane protein Nham_2738 from Nitrobacter hamburgensis (strain DSM 10229 / NCIMB 13809 / X14).